The following is a 104-amino-acid chain: Large ribosomal subunit protein bL21 (104 aa).

This sequence belongs to the bacterial ribosomal protein bL21 family. As to quaternary structure, part of the 50S ribosomal subunit. Contacts protein L20.

Functionally, this protein binds to 23S rRNA in the presence of protein L20. The chain is Large ribosomal subunit protein bL21 from Acidiphilium cryptum (strain JF-5).